A 420-amino-acid polypeptide reads, in one-letter code: Transcription activator GLK1 (420 aa).

Residues 74–152 (GDFSNHMNAS…NRISNNEGKR (79 aa)) are disordered. Over residues 106–117 (KGEEVVSKRDDV) the composition is skewed to basic and acidic residues. Residues 135–147 (SSSASSKNNRISN) are compositionally biased toward low complexity. A DNA-binding region (myb-like GARP) is located at residues 150-209 (GKRKVKVDWTPELHRRFVEAVEQLGVDKAVPSRILELMGVHCLTRHNVASHLQKYRSHRK).

As to quaternary structure, interacts with NAC92. As to expression, expressed in rosette and cauline leaves. Expressed at low levels in cotyledons and shoots.

Its subcellular location is the nucleus. In terms of biological role, transcriptional activator that functions with GLK2 to promote chloroplast development. Acts as an activator of nuclear photosynthetic genes involved in chlorophyll biosynthesis, light harvesting, and electron transport. Acts in a cell-autonomous manner to coordinate and maintain the photosynthetic apparatus within individual cells. May function in photosynthetic capacity optimization by integrating responses to variable environmental and endogenous cues. Prevents premature senescence. This Arabidopsis thaliana (Mouse-ear cress) protein is Transcription activator GLK1 (GLK1).